Reading from the N-terminus, the 248-residue chain is Probable transcriptional regulatory protein P9303_05381 (248 aa).

It belongs to the TACO1 family.

It is found in the cytoplasm. The polypeptide is Probable transcriptional regulatory protein P9303_05381 (Prochlorococcus marinus (strain MIT 9303)).